Reading from the N-terminus, the 397-residue chain is 1-deoxy-D-xylulose 5-phosphate reductoisomerase (397 aa).

7 residues coordinate NADPH: Ser10, Gly11, Ser12, Ile13, Ala36, Arg37, and Asn124. Lys125 is a binding site for 1-deoxy-D-xylulose 5-phosphate. Glu126 is an NADPH binding site. A Mn(2+)-binding site is contributed by Asp150. 1-deoxy-D-xylulose 5-phosphate-binding residues include Ser151, Glu152, Ser186, and His209. Mn(2+) is bound at residue Glu152. Gly215 provides a ligand contact to NADPH. Residues Ser222, Asn227, Lys228, and Glu231 each coordinate 1-deoxy-D-xylulose 5-phosphate. Glu231 contributes to the Mn(2+) binding site.

The protein belongs to the DXR family. The cofactor is Mg(2+). Mn(2+) serves as cofactor.

The catalysed reaction is 2-C-methyl-D-erythritol 4-phosphate + NADP(+) = 1-deoxy-D-xylulose 5-phosphate + NADPH + H(+). Its pathway is isoprenoid biosynthesis; isopentenyl diphosphate biosynthesis via DXP pathway; isopentenyl diphosphate from 1-deoxy-D-xylulose 5-phosphate: step 1/6. Its function is as follows. Catalyzes the NADPH-dependent rearrangement and reduction of 1-deoxy-D-xylulose-5-phosphate (DXP) to 2-C-methyl-D-erythritol 4-phosphate (MEP). This Aeromonas hydrophila subsp. hydrophila (strain ATCC 7966 / DSM 30187 / BCRC 13018 / CCUG 14551 / JCM 1027 / KCTC 2358 / NCIMB 9240 / NCTC 8049) protein is 1-deoxy-D-xylulose 5-phosphate reductoisomerase.